Here is a 557-residue protein sequence, read N- to C-terminus: Fanconi anemia group C protein homolog (557 aa).

Belongs to the multisubunit FA complex composed of FANCA, FANCB, FANCC, FANCE, FANCF, FANCG, FANCL/PHF9 and FANCM. This complex may also include HSP70. Interacts with ZBTB32. Upon IFNG induction, interacts with STAT1. Interacts with CDK1. Interacts with EIF2AK2.

It is found in the nucleus. It localises to the cytoplasm. In terms of biological role, DNA repair protein that may operate in a postreplication repair or a cell cycle checkpoint function. May be implicated in interstrand DNA cross-link repair and in the maintenance of normal chromosome stability. Upon IFNG induction, may facilitate STAT1 activation by recruiting STAT1 to IFNGR1. The protein is Fanconi anemia group C protein homolog (Fancc) of Rattus norvegicus (Rat).